The following is a 493-amino-acid chain: Cysteine--tRNA ligase (493 aa).

Position 31 (Cys-31) interacts with Zn(2+). The 'HIGH' region motif lies at 33–43; that stretch reads PTVYGDAHLGH. Residues Cys-226, His-251, and Glu-255 each contribute to the Zn(2+) site. A 'KMSKS' region motif is present at residues 283–287; that stretch reads KMGKS. Lys-286 is a binding site for ATP.

Belongs to the class-I aminoacyl-tRNA synthetase family. In terms of assembly, monomer. It depends on Zn(2+) as a cofactor.

It localises to the cytoplasm. It carries out the reaction tRNA(Cys) + L-cysteine + ATP = L-cysteinyl-tRNA(Cys) + AMP + diphosphate. The chain is Cysteine--tRNA ligase from Bacteroides thetaiotaomicron (strain ATCC 29148 / DSM 2079 / JCM 5827 / CCUG 10774 / NCTC 10582 / VPI-5482 / E50).